We begin with the raw amino-acid sequence, 66 residues long: Large ribosomal subunit protein bL35 (66 aa).

Belongs to the bacterial ribosomal protein bL35 family.

This is Large ribosomal subunit protein bL35 from Acholeplasma laidlawii (strain PG-8A).